The chain runs to 497 residues: Glycerol kinase (497 aa).

Position 11 (threonine 11) interacts with ADP. The ATP site is built by threonine 11, serine 12, and serine 13. Threonine 11 serves as a coordination point for sn-glycerol 3-phosphate. Residue arginine 15 participates in ADP binding. Sn-glycerol 3-phosphate is bound by residues arginine 81, glutamate 82, tyrosine 133, and aspartate 242. Glycerol-binding residues include arginine 81, glutamate 82, tyrosine 133, aspartate 242, and glutamine 243. 2 residues coordinate ADP: threonine 264 and glycine 307. Threonine 264, glycine 307, glutamine 311, and glycine 412 together coordinate ATP. ADP is bound by residues glycine 412 and asparagine 416.

Belongs to the FGGY kinase family.

The catalysed reaction is glycerol + ATP = sn-glycerol 3-phosphate + ADP + H(+). Its pathway is polyol metabolism; glycerol degradation via glycerol kinase pathway; sn-glycerol 3-phosphate from glycerol: step 1/1. With respect to regulation, inhibited by fructose 1,6-bisphosphate (FBP). Its function is as follows. Key enzyme in the regulation of glycerol uptake and metabolism. Catalyzes the phosphorylation of glycerol to yield sn-glycerol 3-phosphate. In Polaromonas sp. (strain JS666 / ATCC BAA-500), this protein is Glycerol kinase.